The primary structure comprises 310 residues: MASYASEVKKELTSIEVHPEHAKAELAAFLRMNAVLSRHDGQMSLDIVTENPAIARRIFSLIKTAYGFDPQLIVTRKMKLKKNHQYLVRVAQMVSEIMADLEIYSPKKGFITGVPDKIKYSEQRSMSYLRGGFLASGSVNNPETSRYHLEIYCTYANHSQDLQEIMNKYFDLNAKVTARRSGSIVYLKEAEKIGDFLHVVGAVNAMLAFEDLRIMRDMRNSVNRLVNCDTANLRKTAGAAAKQVEDIELIDKKQGLEPLPEKLASLARFRLQHPELSLKELAEQVPDGPISKSGVNHRLKKLHEIAENLR.

Positions 277-310 (SLKELAEQVPDGPISKSGVNHRLKKLHEIAENLR) form a DNA-binding region, H-T-H motif.

This sequence belongs to the WhiA family.

Its function is as follows. Involved in cell division and chromosome segregation. The chain is Probable cell division protein WhiA from Lactobacillus delbrueckii subsp. bulgaricus (strain ATCC 11842 / DSM 20081 / BCRC 10696 / JCM 1002 / NBRC 13953 / NCIMB 11778 / NCTC 12712 / WDCM 00102 / Lb 14).